Reading from the N-terminus, the 206-residue chain is LexA repressor (206 aa).

The segment at residues Val-28–Ser-48 is a DNA-binding region (H-T-H motif). Active-site for autocatalytic cleavage activity residues include Ser-129 and Lys-167.

The protein belongs to the peptidase S24 family. Homodimer.

It catalyses the reaction Hydrolysis of Ala-|-Gly bond in repressor LexA.. Represses a number of genes involved in the response to DNA damage (SOS response), including recA and lexA. In the presence of single-stranded DNA, RecA interacts with LexA causing an autocatalytic cleavage which disrupts the DNA-binding part of LexA, leading to derepression of the SOS regulon and eventually DNA repair. This Staphylococcus epidermidis (strain ATCC 35984 / DSM 28319 / BCRC 17069 / CCUG 31568 / BM 3577 / RP62A) protein is LexA repressor.